The sequence spans 666 residues: Protein-arginine deiminase type-4 (666 aa).

Ca(2+) contacts are provided by asparagine 153, aspartate 155, aspartate 165, aspartate 168, aspartate 176, and aspartate 179. 2 positions are modified to citrulline: arginine 212 and arginine 218. Glutamine 349 serves as a coordination point for Ca(2+). Residue aspartate 350 is part of the active site. Ca(2+) is bound by residues glutamate 351, glutamate 353, aspartate 369, and serine 370. 3 positions are modified to citrulline: arginine 372, arginine 374, and arginine 383. Arginine 374 contributes to the substrate binding site. Ca(2+) is bound by residues phenylalanine 407, leucine 410, and glutamate 411. Active-site residues include histidine 471, aspartate 473, and cysteine 648.

It belongs to the protein arginine deiminase family. The cofactor is Ca(2+). Post-translationally, autocitrullination at Arg-372 and Arg-374 inactivates the enzyme. As to expression, expressed in pluripotent embryonic stem and induced pluripotent stem cells but not multipotent neural stem cells.

Its subcellular location is the cytoplasm. The protein resides in the nucleus. It localises to the cytoplasmic granule. The enzyme catalyses L-arginyl-[protein] + H2O = L-citrullyl-[protein] + NH4(+). Its activity is regulated as follows. Strongly Inhibited by F-amidine and N-alpha-benzoyl-N5-(2-chloro-1-iminoethyl)-L-ornithine amide (Cl-amidine). These inhibitors are however not specific to PADI4 and also inhibit other members of the family. In terms of biological role, catalyzes the citrullination/deimination of arginine residues of proteins such as histones, thereby playing a key role in histone code and regulation of stem cell maintenance. Citrullinates histone H1 at 'Arg-54' (to form H1R54ci), histone H3 at 'Arg-2', 'Arg-8', 'Arg-17' and/or 'Arg-26' (to form H3R2ci, H3R8ci, H3R17ci, H3R26ci, respectively) and histone H4 at 'Arg-3' (to form H4R3ci). Acts as a key regulator of stem cell maintenance by mediating citrullination of histone H1: citrullination of 'Arg-54' of histone H1 (H1R54ci) results in H1 displacement from chromatin and global chromatin decondensation, thereby promoting pluripotency and stem cell maintenance. Promotes profound chromatin decondensation during the innate immune response to infection in neutrophils by mediating formation of H1R54ci. Required for the formation of neutrophil extracellular traps (NETs); NETs are mainly composed of DNA fibers and are released by neutrophils to bind pathogens during inflammation. Citrullination of histone H3 prevents their methylation by CARM1 and HRMT1L2/PRMT1 and represses transcription. Citrullinates EP300/P300 at 'Arg-2142', which favors its interaction with NCOA2/GRIP1. The protein is Protein-arginine deiminase type-4 (Padi4) of Mus musculus (Mouse).